The primary structure comprises 1435 residues: Nitric oxide synthase 1 (1435 aa).

Residues 1–206 are interaction with NOSIP; sequence MEEHVFGVQQ…LQGSGDKNEL (206 aa). Positions 17-99 constitute a PDZ domain; sequence SVRLFKRKVG…ETHVVLILRG (83 aa). Disordered regions lie at residues 110-201 and 277-304; these read TFTG…QGSG and NNPY…SKCP. The interval 164–246 is interaction with DYNLL1/PIN; the sequence is QGHGQEAGSP…TGVQVDRDFD (83 aa). The span at 290 to 300 shows a compositional bias: polar residues; the sequence is GKQSPTKNGSP. Residue serine 340 coordinates (6R)-L-erythro-5,6,7,8-tetrahydrobiopterin. Cysteine 421 is a heme b binding site. The L-arginine site is built by glutamine 484, tryptophan 593, tyrosine 594, and glutamate 598. Positions 683, 684, and 697 each coordinate (6R)-L-erythro-5,6,7,8-tetrahydrobiopterin. Position 712 (tyrosine 712) interacts with heme b. The calmodulin-binding stretch occupies residues 731 to 751; it reads KRRAIGFKKLAEAVKFSAKLM. A Flavodoxin-like domain is found at 761–941; it reads ATILYATETG…AFRTWAKKVF (181 aa). FMN contacts are provided by threonine 767, glutamate 768, threonine 769, lysine 771, serine 772, serine 813, threonine 814, and glycine 818. A phosphoserine mark is found at serine 853, serine 863, and serine 864. FMN contacts are provided by serine 892, histidine 897, cysteine 899, glutamate 925, and glutamine 929. The FAD-binding FR-type domain occupies 996–1243; it reads KRVSAARLLS…VRGAPSFRLP (248 aa). Arginine 1016 provides a ligand contact to NADP(+). Residues histidine 1038, arginine 1179, tyrosine 1180, tyrosine 1181, serine 1182, threonine 1197, and alanine 1199 each contribute to the FAD site. Residue serine 1202 participates in NADP(+) binding. Positions 1203, 1216, 1217, and 1218 each coordinate FAD. Residues threonine 1257, arginine 1290, serine 1319, arginine 1320, lysine 1326, tyrosine 1328, glutamine 1330, aspartate 1363, threonine 1404, and arginine 1406 each coordinate NADP(+).

It belongs to the NOS family. As to quaternary structure, homodimer. Interacts with DLG4; the interaction possibly being prevented by the association between NOS1 and CAPON. Forms a ternary complex with CAPON and RASD1. Forms a ternary complex with CAPON and SYN1. Interacts with ZDHHC23. Interacts with NOSIP; which may impair its synaptic location. Interacts with HTR4. Interacts with SLC6A4. Interacts with VAC14. Interacts (via N-terminal domain) with DLG4 (via N-terminal tandem pair of PDZ domains). Interacts with SLC6A4. Forms a complex with ASL, ASS1 and SLC7A1; the complex regulates cell-autonomous L-arginine synthesis and citrulline recycling while channeling extracellular L-arginine to nitric oxide synthesis pathway. Interacts with DMD; localizes NOS1 to sarcolemma in muscle cells. Interacts with DYNLL1; inhibits the nitric oxide synthase activity. Heme b serves as cofactor. Requires FAD as cofactor. It depends on FMN as a cofactor. The cofactor is (6R)-L-erythro-5,6,7,8-tetrahydrobiopterin. Post-translationally, ubiquitinated; mediated by STUB1/CHIP in the presence of Hsp70 and Hsp40 (in vitro).

It localises to the cell membrane. The protein localises to the sarcolemma. It is found in the cell projection. The protein resides in the dendritic spine. It carries out the reaction 2 L-arginine + 3 NADPH + 4 O2 + H(+) = 2 L-citrulline + 2 nitric oxide + 3 NADP(+) + 4 H2O. With respect to regulation, stimulated by calcium/calmodulin. Inhibited by DYNLL1 that prevents the dimerization of the protein. Inhibited by NOSIP. Its function is as follows. Produces nitric oxide (NO) which is a messenger molecule with diverse functions throughout the body. In the brain and peripheral nervous system, NO displays many properties of a neurotransmitter. Probably has nitrosylase activity and mediates cysteine S-nitrosylation of cytoplasmic target proteins such SRR. In Oryctolagus cuniculus (Rabbit), this protein is Nitric oxide synthase 1 (NOS1).